A 466-amino-acid polypeptide reads, in one-letter code: NADH-quinone oxidoreductase subunit N (466 aa).

A run of 14 helical transmembrane segments spans residues 9–29 (LIPL…GAIV), 33–53 (CGTV…MLAP), 68–88 (PFTR…LLLA), 100–120 (EEYP…ASAA), 122–142 (FLTL…LVAY), 157–177 (LLMG…LYGA), 190–210 (SAAG…GLAF), 232–252 (VVAF…LLIL), 263–283 (APLW…ALLQ), 289–309 (MLAY…LSGG), 314–334 (AAAF…GALA), 359–379 (GVVL…VGFV), 394–416 (APLA…RVVV), and 438–458 (LSLG…GPLF).

This sequence belongs to the complex I subunit 2 family. In terms of assembly, NDH-1 is composed of 14 different subunits. Subunits NuoA, H, J, K, L, M, N constitute the membrane sector of the complex.

It localises to the cell inner membrane. It carries out the reaction a quinone + NADH + 5 H(+)(in) = a quinol + NAD(+) + 4 H(+)(out). Its function is as follows. NDH-1 shuttles electrons from NADH, via FMN and iron-sulfur (Fe-S) centers, to quinones in the respiratory chain. The immediate electron acceptor for the enzyme in this species is believed to be ubiquinone. Couples the redox reaction to proton translocation (for every two electrons transferred, four hydrogen ions are translocated across the cytoplasmic membrane), and thus conserves the redox energy in a proton gradient. The sequence is that of NADH-quinone oxidoreductase subunit N from Geobacter metallireducens (strain ATCC 53774 / DSM 7210 / GS-15).